The primary structure comprises 234 residues: Toxic shock syndrome toxin-1 (234 aa).

An N-terminal signal peptide occupies residues 1–40 (MNKKLLMNFFIVSPLLLATTATDFTPVPLSSNQIIKTAKA).

This sequence belongs to the staphylococcal/streptococcal toxin family.

It is found in the secreted. In terms of biological role, responsible for the symptoms of toxic shock syndrome. The sequence is that of Toxic shock syndrome toxin-1 (tst) from Staphylococcus aureus.